The sequence spans 1241 residues: Dinoflagellate luciferase (1241 aa).

Luciferase regions lie at residues 114–465 (KTGL…IKRD), 491–842 (DQGF…TKRD), and 868–1218 (EKGF…KKRD).

This sequence belongs to the calycin superfamily. Luciferase family.

It is found in the cytoplasmic vesicle. It catalyses the reaction dinoflagellate luciferin + O2 = oxidized dinoflagellate luciferin + hnu + H2O + H(+). With respect to regulation, regulated by pH: upon acidification, at a pH of 6.3, dinoflagellate luciferin is released from luciferin-binding protein LBP, allowing the interaction between Dinoflagellate luciferase and its substrate luciferin. Its function is as follows. Emits blue light flashes with a wavelength of 475 nm during the night phase. This is Dinoflagellate luciferase from Lingulodinium polyedra (Dinoflagellate).